The chain runs to 169 residues: uncharacterized protein (169 aa).

The region spanning 18-79 is the HTH asnC-type domain; it reads LDRADVALLN…IVSPKAVGRP (62 aa). The segment at residues 37 to 56 is a DNA-binding region (H-T-H motif); it reads SEELADKVGLSPTACQRRLK.

This is an uncharacterized protein from Sinorhizobium fredii (strain NBRC 101917 / NGR234).